Reading from the N-terminus, the 173-residue chain is MQFPMGPACIFLRKGIAEKQRERPLGQDEIEELREAFLEFDKDRDGFISCKDLGNLMRTMGYMPTEMELIELGQQIRMNLGGRVDFDDFVELMTPKLLAETAGMIGVQEMRDAFKEFDTNGDGEITLVELQQAMQRLLGERLTPREISEVVREADVNGDGTVDFEEFVKMMSR.

EF-hand domains are found at residues 28–63 (DEIE…MGYM), 82–99 (GRVD…KLLA), 105–140 (IGVQ…LLGE), and 142–173 (LTPR…MMSR). 4 residues coordinate Ca(2+): Asp41, Asp43, Asp45, and Asp52. Positions 118, 120, 122, 124, 129, 155, 157, 159, 161, and 166 each coordinate Ca(2+).

Interacts with CACNA1C (via C-terminal CDB motif) in a calcium-dependent manner. Interacts with STXBP1. Interacts with MYO6. As to expression, retina.

It localises to the cytoplasm. Its function is as follows. Inhibits calcium-dependent inactivation of L-type calcium channel and shifts voltage dependence of activation to more depolarized membrane potentials. Involved in the transmission of light signals. May positively regulate neurotransmitter vesicle endocytosis and exocytosis in a salt-dependent manner. May play a role in the extension and network organization of neurites. The protein is Calcium-binding protein 5 (CABP5) of Homo sapiens (Human).